The following is a 59-amino-acid chain: Small ribosomal subunit protein bS21 (59 aa).

The protein belongs to the bacterial ribosomal protein bS21 family.

This chain is Small ribosomal subunit protein bS21, found in Acaryochloris marina (strain MBIC 11017).